The chain runs to 467 residues: Replication factor C large subunit (467 aa).

47–54 (GPPGVGKT) is an ATP binding site.

Belongs to the activator 1 small subunits family. RfcL subfamily. As to quaternary structure, heteromultimer composed of small subunits (RfcS) and large subunits (RfcL).

Its function is as follows. Part of the RFC clamp loader complex which loads the PCNA sliding clamp onto DNA. In Methanothrix thermoacetophila (strain DSM 6194 / JCM 14653 / NBRC 101360 / PT) (Methanosaeta thermophila), this protein is Replication factor C large subunit.